A 185-amino-acid chain; its full sequence is UPF0301 protein HDEF_0602 (185 aa).

Belongs to the UPF0301 (AlgH) family.

This chain is UPF0301 protein HDEF_0602, found in Hamiltonella defensa subsp. Acyrthosiphon pisum (strain 5AT).